The chain runs to 94 residues: UPF0213 protein BH0048 (94 aa).

Positions 1–76 (MNHYVYILEC…KHLSRRKKEQ (76 aa)) constitute a GIY-YIG domain.

This sequence belongs to the UPF0213 family.

This Halalkalibacterium halodurans (strain ATCC BAA-125 / DSM 18197 / FERM 7344 / JCM 9153 / C-125) (Bacillus halodurans) protein is UPF0213 protein BH0048.